The primary structure comprises 378 residues: Ribosomal RNA large subunit methyltransferase G (378 aa).

This sequence belongs to the methyltransferase superfamily. RlmG family.

It localises to the cytoplasm. The catalysed reaction is guanosine(1835) in 23S rRNA + S-adenosyl-L-methionine = N(2)-methylguanosine(1835) in 23S rRNA + S-adenosyl-L-homocysteine + H(+). Its function is as follows. Specifically methylates the guanine in position 1835 (m2G1835) of 23S rRNA. The sequence is that of Ribosomal RNA large subunit methyltransferase G from Salmonella newport (strain SL254).